The following is a 383-amino-acid chain: Fatty acid hydroxylase ahd1 (383 aa).

4 helical membrane-spanning segments follow: residues valine 84–tryptophan 104, threonine 123–leucine 143, leucine 172–tyrosine 192, and valine 214–histidine 236. One can recognise a Fatty acid hydroxylase domain in the interval tryptophan 217 to threonine 341. Residue asparagine 342 is glycosylated (N-linked (GlcNAc...) asparagine).

This sequence belongs to the sterol desaturase family.

Its subcellular location is the membrane. It participates in secondary metabolite biosynthesis. In terms of biological role, fatty acid hydroxylase; part of the gene cluster that mediates the biosynthesis of the glycolipid biosurfactant ustilagic acid (UA). UA is a secreted cellobiose glycolipid that is toxic for many microorganisms and confers biocontrol activity to U.maydis. UA consists of 15,16-dihydroxypalmitic or 2,15,16-trihydroxypalmitic acid, which is O-glycosidically linked to cellobiose at its terminal hydroxyl group. In addition, the cellobiose moiety is acetylated and acylated with a short-chain hydroxy fatty acid. UA biosynthesis starts with omega-hydroxylation of palmitic acid catalyzed by the cytochrome P450 monooxygenase cyp1. Terminal hydroxylation of palmitic acid precedes subterminal hydroxylation catalyzed by the cytochrome P450 monooxygenase cyp2. Sequential glucosylation of the hydroxy fatty acid is probably catalyzed by the glycosyltransferase ugt1. The cellobiose lipid is further decorated by acetylation of the proximal glucose residue and by acylation with a short-chain beta-hydroxy fatty acid at the distal glucose residue. The acyltransferase uat1 may be a good candidate for catalyzing either acetylation or acylation of the cellobiose lipid. The fatty acid synthase fas2 may be involved in synthesis of the carbon backbone of the short-chain beta-hydroxy fatty acid esterified to the cellobiose disaccharide. The secreted UA consists of a mixture of both alpha-hydroxylated and non-hydroxylated glycolipids; therefore, alpha-hydroxylation of the long-chain fatty, catalyzed by the fatty acid hydroxylase ahd1, occurs late in UA biosynthesis and may be the last step before secretion. The protein is Fatty acid hydroxylase ahd1 of Mycosarcoma maydis (Corn smut fungus).